A 230-amino-acid polypeptide reads, in one-letter code: MITIALPSKGRMKEDASAVLERAGLKVASVGNDRSYRGRIEGRDDIEVAYLSASEIAREIGAGTVDFGVTGEDLVREGLTNADAQVEFCARLGFGHADVVVAVPEIWLDVDSMADLGDVASEFRARHGRRLAIATKYWRLTQQFFSRQHGIQLYRIVESLGATEGAPAAGQADIIVDITSTGSTLKANHLKILSDGIIVRSEACFVRARKPEHEGDAAIQEIASRIKAAV.

Belongs to the ATP phosphoribosyltransferase family. Short subfamily. In terms of assembly, heteromultimer composed of HisG and HisZ subunits.

The protein resides in the cytoplasm. The catalysed reaction is 1-(5-phospho-beta-D-ribosyl)-ATP + diphosphate = 5-phospho-alpha-D-ribose 1-diphosphate + ATP. Its pathway is amino-acid biosynthesis; L-histidine biosynthesis; L-histidine from 5-phospho-alpha-D-ribose 1-diphosphate: step 1/9. Functionally, catalyzes the condensation of ATP and 5-phosphoribose 1-diphosphate to form N'-(5'-phosphoribosyl)-ATP (PR-ATP). Has a crucial role in the pathway because the rate of histidine biosynthesis seems to be controlled primarily by regulation of HisG enzymatic activity. In Agrobacterium fabrum (strain C58 / ATCC 33970) (Agrobacterium tumefaciens (strain C58)), this protein is ATP phosphoribosyltransferase.